An 84-amino-acid chain; its full sequence is Dolichol phosphate-mannose biosynthesis regulatory protein (84 aa).

The next 2 membrane-spanning stretches (helical) occupy residues 11–31 (FGLVAVSLIIFTYYTTWVILL) and 49–69 (YAVLIPLATGLLLLLFVGLFI).

Belongs to the DPM2 family. As to quaternary structure, component of the dolichol-phosphate mannose (DPM) synthase complex composed of DPM1, DPM2 and DPM3; in the complex interacts directly with DPM3. Component of the glycosylphosphatidylinositol-N-acetylglucosaminyltransferase (GPI-GnT) complex composed at least by PIGA, PIGC, PIGH, PIGP, PIGQ, PIGY and DPM2. Interacts with PIGA, PIGC and PIGQ.

It localises to the endoplasmic reticulum membrane. The protein operates within protein modification; protein glycosylation. Regulates the biosynthesis of dolichol phosphate-mannose. Regulatory subunit of the dolichol-phosphate mannose (DPM) synthase complex; essential for the ER localization and stable expression of DPM1. Part of the glycosylphosphatidylinositol-N-acetylglucosaminyltransferase (GPI-GnT) complex that catalyzes the transfer of N-acetylglucosamine from UDP-N-acetylglucosamine to phosphatidylinositol and participates in the first step of GPI biosynthesis. May act by regulating the GPI-GNT complex. The chain is Dolichol phosphate-mannose biosynthesis regulatory protein from Cricetulus griseus (Chinese hamster).